Here is a 72-residue protein sequence, read N- to C-terminus: Translation initiation factor IF-1 (72 aa).

The S1-like domain maps to 1 to 72 (MAKEEVLEFP…TKGRITYRFK (72 aa)).

This sequence belongs to the IF-1 family. Component of the 30S ribosomal translation pre-initiation complex which assembles on the 30S ribosome in the order IF-2 and IF-3, IF-1 and N-formylmethionyl-tRNA(fMet); mRNA recruitment can occur at any time during PIC assembly.

The protein localises to the cytoplasm. Its function is as follows. One of the essential components for the initiation of protein synthesis. Stabilizes the binding of IF-2 and IF-3 on the 30S subunit to which N-formylmethionyl-tRNA(fMet) subsequently binds. Helps modulate mRNA selection, yielding the 30S pre-initiation complex (PIC). Upon addition of the 50S ribosomal subunit IF-1, IF-2 and IF-3 are released leaving the mature 70S translation initiation complex. This Sinorhizobium medicae (strain WSM419) (Ensifer medicae) protein is Translation initiation factor IF-1.